The following is a 319-amino-acid chain: Probable casein kinase II subunit alpha homolog (319 aa).

The Protein kinase domain maps to 37 to 316; sequence YQIYQRMGRG…ADECLRHPLF (280 aa). ATP-binding positions include 43–51 and lysine 64; that span reads MGRGKYSEV. The active-site Proton acceptor is aspartate 151.

Belongs to the protein kinase superfamily. Ser/Thr protein kinase family. CK2 subfamily. In terms of assembly, tetramer composed of two alpha chains, one beta chain and one beta' chain.

It carries out the reaction L-seryl-[protein] + ATP = O-phospho-L-seryl-[protein] + ADP + H(+). The enzyme catalyses L-threonyl-[protein] + ATP = O-phospho-L-threonyl-[protein] + ADP + H(+). Functionally, catalytic subunit of a constitutively active serine/threonine-protein kinase complex that phosphorylates a large number of substrates containing acidic residues C-terminal to the phosphorylated serine or threonine. The chain is Probable casein kinase II subunit alpha homolog (CKA1) from Encephalitozoon cuniculi (strain GB-M1) (Microsporidian parasite).